The primary structure comprises 331 residues: Probable protein phosphatase 2C 72 (331 aa).

A PPM-type phosphatase domain is found at 43-324 (LGSVCSIQGT…DDITVICLFL (282 aa)). Mn(2+)-binding residues include aspartate 78, glycine 79, aspartate 268, and aspartate 315.

Belongs to the PP2C family. Requires Mg(2+) as cofactor. Mn(2+) serves as cofactor.

It catalyses the reaction O-phospho-L-seryl-[protein] + H2O = L-seryl-[protein] + phosphate. The catalysed reaction is O-phospho-L-threonyl-[protein] + H2O = L-threonyl-[protein] + phosphate. In Arabidopsis thaliana (Mouse-ear cress), this protein is Probable protein phosphatase 2C 72.